Consider the following 203-residue polypeptide: Small ribosomal subunit protein uS4 (203 aa).

Residues 93–156 (RRLDNVVYRL…MKVPAILEAV (64 aa)) enclose the S4 RNA-binding domain.

It belongs to the universal ribosomal protein uS4 family. Part of the 30S ribosomal subunit. Contacts protein S5. The interaction surface between S4 and S5 is involved in control of translational fidelity.

Its function is as follows. One of the primary rRNA binding proteins, it binds directly to 16S rRNA where it nucleates assembly of the body of the 30S subunit. With S5 and S12 plays an important role in translational accuracy. This Streptococcus agalactiae serotype Ia (strain ATCC 27591 / A909 / CDC SS700) protein is Small ribosomal subunit protein uS4.